A 203-amino-acid chain; its full sequence is Glycerol-3-phosphate acyltransferase (203 aa).

5 consecutive transmembrane segments (helical) span residues 2-22 (LATL…AILV), 54-74 (CLVL…AYFL), 80-100 (ALGL…FFGF), 114-134 (LPIG…MVAI), and 153-173 (TWLI…LIIF).

It belongs to the PlsY family. Probably interacts with PlsX.

The protein resides in the cell inner membrane. The catalysed reaction is an acyl phosphate + sn-glycerol 3-phosphate = a 1-acyl-sn-glycero-3-phosphate + phosphate. It participates in lipid metabolism; phospholipid metabolism. Catalyzes the transfer of an acyl group from acyl-phosphate (acyl-PO(4)) to glycerol-3-phosphate (G3P) to form lysophosphatidic acid (LPA). This enzyme utilizes acyl-phosphate as fatty acyl donor, but not acyl-CoA or acyl-ACP. The sequence is that of Glycerol-3-phosphate acyltransferase from Pseudoalteromonas translucida (strain TAC 125).